Reading from the N-terminus, the 328-residue chain is uncharacterized protein (328 aa).

The SIS domain maps to 37 to 179 (LTEKLLCHQG…AMTLLRCRKI (143 aa)). 52-57 (GIGKSG) provides a ligand contact to ATP. CBS domains are found at residues 207–264 (PRTE…GGDI) and 273–328 (MTRN…AGLL).

This sequence belongs to the SIS family. GutQ/KpsF subfamily.

This is an uncharacterized protein from Chlamydia trachomatis serovar D (strain ATCC VR-885 / DSM 19411 / UW-3/Cx).